Consider the following 181-residue polypeptide: Cytochrome P450 monooxygenase dtpC (181 aa).

Residue Cys-125 coordinates heme.

This sequence belongs to the cytochrome P450 family. It depends on heme as a cofactor.

It participates in alkaloid biosynthesis. Its pathway is secondary metabolite biosynthesis. Cytochrome P450 monooxygenase; part of the gene cluster that mediates the biosynthesis of the dimeric diketopiperazine alkaloid ditryptophenaline. The nonribosomal peptide synthase dtpA accepts L-tryptophan and L-phenylalanine as its substrates and forms the phenylalanyl-tryptophanyl cyclic dipeptide product cyclophenylalanyltryptophenyl. The N-methyltransferase dtpB is responsible for the N-methylation of cyclophenylalanyltryptophenyl to yield cyclo-N-methylphenylalanyltryptophenyl. The cytochrome P450 monooxygenase is responsible not only for pyrroloindole ring formation but also for concurrent dimerization of N-methylphenylalanyltryptophanyl diketopiperazine monomers into a homodimeric product. The chain is Cytochrome P450 monooxygenase dtpC from Aspergillus flavus (strain ATCC 200026 / FGSC A1120 / IAM 13836 / NRRL 3357 / JCM 12722 / SRRC 167).